Reading from the N-terminus, the 416-residue chain is Cyclic dinucleotide synthase CdnG (416 aa).

S72 provides a ligand contact to GTP. Active-site residues include D89, D91, and D140. A GTP-binding site is contributed by D91. A Mg(2+)-binding site is contributed by D91. Residues 145–167 (RRRAPKEKEGEIPHAKKGTRSDP) form a disordered region. Residues 150–167 (KEKEGEIPHAKKGTRSDP) show a composition bias toward basic and acidic residues. GTP is bound by residues K236, S253, E305, R306, and D309.

Belongs to the CD-NTase family. G10 subfamily. Mg(2+) serves as cofactor.

It carries out the reaction UTP + GTP = 3',3'-cGMP-UMP + 2 diphosphate. The catalysed reaction is GTP + ATP = 3',3'-cGAMP + 2 diphosphate. The enzyme catalyses 2 ATP = 3',3'-c-di-AMP + 2 diphosphate. Its function is as follows. Cyclic nucleotide synthase (second messenger synthase) of a CBASS antivirus system. CBASS (cyclic oligonucleotide-based antiphage signaling system) provides immunity against bacteriophage. The CD-NTase protein synthesizes cyclic nucleotides in response to infection; these serve as specific second messenger signals. The signals activate a diverse range of effectors, leading to bacterial cell death and thus abortive phage infection. A type II-short CBASS system. Functionally, cyclic dinucleotide synthase that catalyzes the synthesis of predominantly 3'3'-cGMP-UMP, followed by 3'3'-cGAMP and c-di-AMP in a reaction mixture of ATP, CTP, GTP and UTP. The cyclic nucleotide products are second messengers that activate the CBASS Cap5 effector nuclease, leading to DNA degradation and probably cell death. Cyclic nucleotides do not activate the effector equally; reactions with ATP/GTP, ATP/UTP and ATP alone activate Cap5, whereas reaction with GTP/UTP (the major in vitro product) do not. The protein is Cyclic dinucleotide synthase CdnG of Bradyrhizobium diazoefficiens (strain JCM 10833 / BCRC 13528 / IAM 13628 / NBRC 14792 / USDA 110).